Consider the following 84-residue polypeptide: Small ribosomal subunit protein uS17 (84 aa).

Belongs to the universal ribosomal protein uS17 family. As to quaternary structure, part of the 30S ribosomal subunit.

Functionally, one of the primary rRNA binding proteins, it binds specifically to the 5'-end of 16S ribosomal RNA. In Clostridium acetobutylicum (strain ATCC 824 / DSM 792 / JCM 1419 / IAM 19013 / LMG 5710 / NBRC 13948 / NRRL B-527 / VKM B-1787 / 2291 / W), this protein is Small ribosomal subunit protein uS17.